The primary structure comprises 576 residues: Arginine--tRNA ligase (576 aa).

The 'HIGH' region motif lies at 132–142; it reads ANPTGPMHIGH.

The protein belongs to the class-I aminoacyl-tRNA synthetase family. In terms of assembly, monomer.

Its subcellular location is the cytoplasm. The catalysed reaction is tRNA(Arg) + L-arginine + ATP = L-arginyl-tRNA(Arg) + AMP + diphosphate. The polypeptide is Arginine--tRNA ligase (Ehrlichia ruminantium (strain Gardel)).